A 160-amino-acid polypeptide reads, in one-letter code: uncharacterized protein (160 aa).

The 133-residue stretch at 20–152 (EREIWVLYMK…VYEGLSILSR (133 aa)) folds into the HTH marR-type domain. A DNA-binding region (H-T-H motif) is located at residues 66–89 (VSDIAEKMGASLSNTTGLLDRLEK).

This is an uncharacterized protein from Bacillus subtilis (strain 168).